The sequence spans 249 residues: Zinc finger protein CG30 (249 aa).

The RING-type zinc-finger motif lies at 8-66 (CHICCSVGEIKNYFLQPVDAITILPIVELHTCRHQLCVMCVRKIAQRGRDKRVECPMCR).

This Orgyia pseudotsugata (Douglas-fir tussock moth) protein is Zinc finger protein CG30 (CG30).